We begin with the raw amino-acid sequence, 390 residues long: Leu/Ile/Val-binding protein homolog 6 (390 aa).

The N-terminal stretch at 1–21 is a signal peptide; the sequence is MKKIALTALAVFSLAASAAYA.

The protein belongs to the leucine-binding protein family.

Its function is as follows. Component of an amino-acid transport system. The polypeptide is Leu/Ile/Val-binding protein homolog 6 (Brucella abortus (strain 2308)).